A 116-amino-acid polypeptide reads, in one-letter code: Large ribosomal subunit protein bL17 (116 aa).

It belongs to the bacterial ribosomal protein bL17 family. In terms of assembly, part of the 50S ribosomal subunit. Contacts protein L32.

The protein is Large ribosomal subunit protein bL17 of Thermosynechococcus vestitus (strain NIES-2133 / IAM M-273 / BP-1).